Here is a 217-residue protein sequence, read N- to C-terminus: Coiled-coil domain-containing protein 124-A (217 aa).

Residues 1–128 (MPKKFQGENT…HLEMPLEENV (128 aa)) are disordered. 3 stretches are compositionally biased toward basic and acidic residues: residues 18–45 (RKAE…DDKH), 52–74 (RKED…QRLL), and 95–128 (TRAE…EENV). A coiled-coil region spans residues 46-82 (VARKGQRKEDKEKKRLEQLERKKESQRLLDEEDSKMK).

Belongs to the CCDC124 family. As to quaternary structure, associates with translationally inactive ribosomes in the nonrotated state.

The protein localises to the cytoplasm. Its subcellular location is the cytoskeleton. It localises to the microtubule organizing center. It is found in the centrosome. The protein resides in the midbody. Its function is as follows. Ribosome-binding protein involved in ribosome hibernation: associates with translationally inactive ribosomes and stabilizes the nonrotated conformation of the 80S ribosome, thereby promoting ribosome preservation and storage. In Xenopus laevis (African clawed frog), this protein is Coiled-coil domain-containing protein 124-A (ccdc124-a).